The primary structure comprises 496 residues: Polyamine oxidase 6 (496 aa).

An N-terminal signal peptide occupies residues 1–27; it reads MTKPTTMAIFLVLALSIAQLLPSLVAG. FAD contacts are provided by E61 and R69. N-linked (GlcNAc...) asparagine glycans are attached at residues N103 and N150. Residue V261 participates in FAD binding. N278 carries an N-linked (GlcNAc...) asparagine glycan. Residue E454 participates in FAD binding.

The protein belongs to the flavin monoamine oxidase family. The cofactor is FAD.

Its subcellular location is the secreted. It localises to the extracellular space. It is found in the apoplast. It functions in the pathway amine and polyamine degradation; spermine degradation. Its function is as follows. Flavoenzyme involved in polyamine back-conversion. Catalyzes the oxidation of the secondary amino group of polyamines, such as spermine and spermidine. This Oryza sativa subsp. japonica (Rice) protein is Polyamine oxidase 6.